Consider the following 92-residue polypeptide: Small ribosomal subunit protein bS16 (92 aa).

This sequence belongs to the bacterial ribosomal protein bS16 family.

The sequence is that of Small ribosomal subunit protein bS16 from Desulforudis audaxviator (strain MP104C).